A 377-amino-acid chain; its full sequence is Tyrosine-protein phosphatase 2 (377 aa).

The Tyrosine-protein phosphatase domain occupies 27–347 (IDKEFNFILQ…RFCYLAISEA (321 aa)). The interval 77-137 (IDDDDDDEDD…EDHGGSGDEG (61 aa)) is disordered. Residues 78-91 (DDDDDDEDDNEDDI) are compositionally biased toward acidic residues. A compositionally biased stretch (low complexity) spans 92-102 (IVSNNNNNNNN). The span at 113–123 (GSSGQSDVMSN) shows a compositional bias: polar residues. The active-site Phosphocysteine intermediate is the Cys281.

This sequence belongs to the protein-tyrosine phosphatase family. Non-receptor class subfamily.

It catalyses the reaction O-phospho-L-tyrosyl-[protein] + H2O = L-tyrosyl-[protein] + phosphate. The protein is Tyrosine-protein phosphatase 2 (ptpB) of Dictyostelium discoideum (Social amoeba).